The primary structure comprises 464 residues: UDP-N-acetylmuramoylalanine--D-glutamate ligase (464 aa).

112–118 (GTDGKTT) provides a ligand contact to ATP.

Belongs to the MurCDEF family.

The protein localises to the cytoplasm. The enzyme catalyses UDP-N-acetyl-alpha-D-muramoyl-L-alanine + D-glutamate + ATP = UDP-N-acetyl-alpha-D-muramoyl-L-alanyl-D-glutamate + ADP + phosphate + H(+). Its pathway is cell wall biogenesis; peptidoglycan biosynthesis. In terms of biological role, cell wall formation. Catalyzes the addition of glutamate to the nucleotide precursor UDP-N-acetylmuramoyl-L-alanine (UMA). This Chlorobium chlorochromatii (strain CaD3) protein is UDP-N-acetylmuramoylalanine--D-glutamate ligase.